The sequence spans 930 residues: Pyruvate dehydrogenase E1 component (930 aa).

Residues methionine 1–leucine 10 are compositionally biased toward basic and acidic residues. The tract at residues methionine 1–aspartate 21 is disordered. Lysine 375 participates in a covalent cross-link: Isoglutamyl lysine isopeptide (Lys-Gln) (interchain with Q-Cter in protein Pup).

As to quaternary structure, homodimer. Part of the PDH complex, consisting of multiple copies of AceE (E1), DlaT (E2) and Lpd (E3). Requires Mg(2+) as cofactor. The cofactor is thiamine diphosphate.

It carries out the reaction N(6)-[(R)-lipoyl]-L-lysyl-[protein] + pyruvate + H(+) = N(6)-[(R)-S(8)-acetyldihydrolipoyl]-L-lysyl-[protein] + CO2. Its function is as follows. Component of the pyruvate dehydrogenase (PDH) complex, that catalyzes the overall conversion of pyruvate to acetyl-CoA and CO(2). AceE has reductase activity with pyruvate but does not react with 2-oxoglutarate. The polypeptide is Pyruvate dehydrogenase E1 component (aceE) (Mycobacterium tuberculosis (strain ATCC 25618 / H37Rv)).